The chain runs to 512 residues: Maturase K (512 aa).

The protein belongs to the intron maturase 2 family. MatK subfamily.

It localises to the plastid. It is found in the chloroplast. Usually encoded in the trnK tRNA gene intron. Probably assists in splicing its own and other chloroplast group II introns. This chain is Maturase K, found in Piper cenocladum (Ant piper).